A 325-amino-acid polypeptide reads, in one-letter code: Taste receptor type 2 member 7 (325 aa).

Residues 1 to 9 (MADKVQTTL) are Extracellular-facing. A helical membrane pass occupies residues 10–30 (LFLAVGEFSVGILGNAFIGLV). At 31–55 (NCMDWVKKRKIASIDLILTSLAISR) the chain is on the cytoplasmic side. A helical transmembrane segment spans residues 56–76 (ICLLCVILLDCFILVLYPDVY). Topologically, residues 77 to 94 (ATGKEMRIIDFFWTLTNH) are extracellular. A helical transmembrane segment spans residues 95–115 (LSIWFATCLSIYYFFRIANFF). Over 116-128 (HPLFLWMKWRIDR) the chain is Cytoplasmic. Residues 129 to 149 (VISWILLGCVVLSVFISLPAT) form a helical membrane-spanning segment. Residues 150 to 187 (ENLNADFRFCVKAKRKTNLTWSCRVNKTQHASTKLFLN) lie on the Extracellular side of the membrane. N167 and N175 each carry an N-linked (GlcNAc...) asparagine glycan. A helical transmembrane segment spans residues 188-208 (LATLLPFCVCLMSFFLLILSL). The Cytoplasmic segment spans residues 209 to 235 (RRHIRRMQLSATGCRDPSTEAHVRALK). A helical membrane pass occupies residues 236 to 256 (AVISFLLLFIAYYLSFLVATS). Over 257–266 (SYFMPETELA) the chain is Extracellular. The helical transmembrane segment at 267–287 (VIFGESIALIYPSSHSFILIL) threads the bilayer. At 288–319 (GNNKLRHASLKVIWKVMSILKGRKFQQHKQIG) the chain is on the cytoplasmic side.

The protein belongs to the G-protein coupled receptor T2R family.

Its subcellular location is the membrane. Gustducin-coupled receptor implicated in the perception of bitter compounds in the oral cavity and the gastrointestinal tract. Signals through PLCB2 and the calcium-regulated cation channel TRPM5. This Pan paniscus (Pygmy chimpanzee) protein is Taste receptor type 2 member 7 (TAS2R7).